The following is a 132-amino-acid chain: MRFLTSLALALIALEAALALAPALNLPGLATCPELSSSSEDPCVISCVNDESCPQGTKCCARSPCSRSCTVPLLVPVPKAGRCPWVPAPLAPELCLEKNECSRDDQCRGNKKCCFSSCAMRCLDPDTEAPLQ.

An N-terminal signal peptide occupies residues 1 to 19 (MRFLTSLALALIALEAALA). WAP domains follow at residues 23-73 (ALNL…TVPL) and 76-126 (PVPK…LDPD). 8 cysteine pairs are disulfide-bonded: Cys32–Cys60, Cys43–Cys65, Cys47–Cys59, Cys53–Cys69, Cys83–Cys114, Cys95–Cys118, Cys101–Cys113, and Cys107–Cys122.

In terms of tissue distribution, milk-specific; major protein component of milk whey.

The protein localises to the secreted. Could be a protease inhibitor. May play an important role in mammary gland development and tissue remodeling. This chain is Whey acidic protein (WAP), found in Sus scrofa (Pig).